The sequence spans 297 residues: Protein phosphatase PTC7 homolog (297 aa).

The N-terminal 27 residues, 1–27 (MLSVLSYGRLVARAVIGGLSQTDSRDY), are a transit peptide targeting the mitochondrion. Residues 28 to 292 (SLVSASFGFG…DDITVLLSIV (265 aa)) enclose the PPM-type phosphatase domain. Mn(2+)-binding residues include D71, G72, and D216.

It belongs to the PP2C family. Mg(2+) serves as cofactor. Requires Mn(2+) as cofactor.

It localises to the mitochondrion matrix. It catalyses the reaction O-phospho-L-seryl-[protein] + H2O = L-seryl-[protein] + phosphate. The catalysed reaction is O-phospho-L-threonyl-[protein] + H2O = L-threonyl-[protein] + phosphate. Protein phosphatase which positively regulates biosynthesis of the ubiquinone, coenzyme Q. Dephosphorylates the ubiquinone biosynthesis protein coq7 which is likely to lead to its activation. The polypeptide is Protein phosphatase PTC7 homolog (pptc7) (Danio rerio (Zebrafish)).